A 582-amino-acid polypeptide reads, in one-letter code: Enhancer of polycomb-like protein 1 (582 aa).

Residues 238–295 (RDAQSADKLRRLRKELEDARQLVALVRQRELARKEMLSMERQIFLQRSEVKEMKRKLN) adopt a coiled-coil conformation. The tract at residues 323–351 (PEQPKKKPAEAPAAQRPTAPQIRMPQKPG) is disordered. Residues 352–385 (TQAADDMQLLEDVQAEKENEILRDIKQNIAKHIK) are a coiled coil. The span at 539–555 (AQAHAQAQAQKRLQAEQ) shows a compositional bias: low complexity. The segment at 539–582 (AQAHAQAQAQKRLQAEQTTTNNGPPNIGHTMGSNPGPGAVASTS) is disordered.

Belongs to the enhancer of polycomb family. In terms of assembly, component of the NuA4 histone acetyltransferase complex.

The protein localises to the nucleus. In terms of biological role, component of the NuA4 histone acetyltransferase complex which is involved in transcriptional activation of selected genes principally by acetylation of nucleosomal histone H4 and H2A. The NuA4 complex is also involved in DNA repair. Involved in gene silencing by neighboring heterochromatin, blockage of the silencing spreading along the chromosome, and required for cell cycle progression through G2/M. This is Enhancer of polycomb-like protein 1 (epl1) from Aspergillus fumigatus (strain ATCC MYA-4609 / CBS 101355 / FGSC A1100 / Af293) (Neosartorya fumigata).